A 177-amino-acid polypeptide reads, in one-letter code: MLEKLIERVLFATRWLLAPLCIAMSLVLVVLGYVFMKELWHMLSHLDTISETDLVLSALGLVDLLFMAGLVLMVLLASYESFVSKLDKVDASEITWLKHTDFNALKLKVSLSIVAISAIFLLKRYMSLEDVLSSIPKDTPLSHNPIFWQVVIHLVFVCSALLTAVTNNIAFSQKERH.

Transmembrane regions (helical) follow at residues 15 to 35, 54 to 74, and 145 to 165; these read WLLAPLCIAMSLVLVVLGYVF, LVLSALGLVDLLFMAGLVLMV, and PIFWQVVIHLVFVCSALLTAV.

It belongs to the UPF0114 family.

The protein resides in the cell membrane. This is UPF0114 protein jhp_0175 from Helicobacter pylori (strain J99 / ATCC 700824) (Campylobacter pylori J99).